The following is a 374-amino-acid chain: 4-hydroxybenzoate polyprenyltransferase, mitochondrial (374 aa).

The transit peptide at 1 to 34 directs the protein to the mitochondrion; sequence MLRWGGAGLARGLRAVRSAWLRGPRGLPLALVRS. At 35-83 the chain is on the mitochondrial matrix side; it reads AGVPGARDRRAPAPGTQRGRALSLSAAAVVNSAPRPLQPYLRLMRLDKP. The chain crosses the membrane as a helical span at residues 84 to 104; it reads IGTWLLYLPCTWSIGLAADPG. At 105–108 the chain is on the mitochondrial intermembrane side; it reads CFPD. The chain crosses the membrane as a helical span at residues 109-129; sequence WYMLSLFGTGAILMRGAGCTI. At 130–148 the chain is on the mitochondrial matrix side; sequence NDMWDRDFDKKVTRTANRP. Residues 149 to 169 traverse the membrane as a helical segment; it reads IAAGDISTFQSFVFLGGQLTL. Residues 170-172 lie on the Mitochondrial intermembrane side of the membrane; that stretch reads ALG. Residues 173–193 traverse the membrane as a helical segment; it reads VLLCLNYYSIAMGAASLLLVV. At 194 to 200 the chain is on the mitochondrial matrix side; sequence TYPLVKR. The helical transmembrane segment at 201-221 threads the bilayer; it reads ITFWPQLALGLTFNWGALLGW. The Mitochondrial intermembrane portion of the chain corresponds to 222-230; sequence SAVKGSCDP. A helical membrane pass occupies residues 231–251; sequence AVCLPLYFSGVMWTLIYDTIY. At 252–277 the chain is on the mitochondrial matrix side; the sequence is AHQDKKDDALIGLKSTALLFQENTRQ. Residues 278-298 traverse the membrane as a helical segment; it reads WLSGFGVAMVAALSLAGANNG. Over 299–332 the chain is Mitochondrial intermembrane; sequence QTVPYYAAVAAVGAHLAHQIYTVDIHRAEDCWDK. The chain crosses the membrane as a helical span at residues 333 to 353; sequence FTSNRTVGMLLFLGIVLGNLC. The Mitochondrial matrix portion of the chain corresponds to 354 to 374; that stretch reads KEKTEEAKDAEAVRVGSEQTS.

Belongs to the UbiA prenyltransferase family. Mg(2+) is required as a cofactor.

Its subcellular location is the mitochondrion inner membrane. It carries out the reaction an all-trans-polyprenyl diphosphate + 4-hydroxybenzoate = a 4-hydroxy-3-(all-trans-polyprenyl)benzoate + diphosphate. The enzyme catalyses all-trans-decaprenyl diphosphate + 4-hydroxybenzoate = 4-hydroxy-3-(all-trans-decaprenyl)benzoate + diphosphate. The catalysed reaction is all-trans-nonaprenyl diphosphate + 4-hydroxybenzoate = 4-hydroxy-3-(all-trans-nonaprenyl)benzoate + diphosphate. Its pathway is cofactor biosynthesis; ubiquinone biosynthesis. Its function is as follows. Mediates the second step in the final reaction sequence of coenzyme Q (CoQ) biosynthesis. Catalyzes the prenylation of para-hydroxybenzoate (PHB) with an all-trans polyprenyl donor (such as all-trans-nonaprenyl diphosphate). The length of the polyprenyl side chain varies depending on the species, in humans, the side chain is comprised of 10 isoprenyls producing CoQ10 (also known as ubiquinone), whereas rodents predominantly generate CoQ9. However, this specificity is not complete, human tissues have low amounts of CoQ9 and rodent organs contain some CoQ10. Plays a central role in the biosynthesis of CoQ9. CoQ9 is a vital molecule that transports electrons from mitochondrial respiratory chain complexes. CoQs also function as cofactors for uncoupling protein and play a role as regulators of the extracellularly-induced ceramide-dependent apoptotic pathway. Regulates mitochondrial permeability transition pore (mPTP) opening and ROS production (pivotal events in cell death) in a tissue specific manner. In Mus musculus (Mouse), this protein is 4-hydroxybenzoate polyprenyltransferase, mitochondrial.